Here is an 865-residue protein sequence, read N- to C-terminus: Probable alpha/beta-glucosidase ARB_02101 (865 aa).

An N-terminal signal peptide occupies residues 1-21 (MFGRTLALAAVFATTVLSAAA). 2 N-linked (GlcNAc...) asparagine glycosylation sites follow: Asn-101 and Asn-299. Residue Asp-428 is the Nucleophile of the active site. Residue Glu-431 is part of the active site. Asn-515 is a glycosylation site (N-linked (GlcNAc...) asparagine). Asp-548 functions as the Proton donor in the catalytic mechanism. N-linked (GlcNAc...) asparagine glycans are attached at residues Asn-549, Asn-585, and Asn-748.

The protein belongs to the glycosyl hydrolase 31 family.

It is found in the secreted. It carries out the reaction Hydrolysis of terminal, non-reducing (1-&gt;4)-linked alpha-D-glucose residues with release of alpha-D-glucose.. The enzyme catalyses Hydrolysis of terminal, non-reducing beta-D-glucosyl residues with release of beta-D-glucose.. Glucosidase involved in the degradation of cellulosic biomass. Has both alpha- and beta-glucosidase activity. The chain is Probable alpha/beta-glucosidase ARB_02101 from Arthroderma benhamiae (strain ATCC MYA-4681 / CBS 112371) (Trichophyton mentagrophytes).